We begin with the raw amino-acid sequence, 295 residues long: bZIP transcription factor 60 (295 aa).

A disordered region spans residues 101–154 (PAAADDSGKENSDLVVEKKSNDSGSEIHDDDDEEGDDDAVAKKRRRRVRNRDAA). Residues 106–127 (DSGKENSDLVVEKKSNDSGSEI) are compositionally biased toward basic and acidic residues. Over residues 128–138 (HDDDDEEGDDD) the composition is skewed to acidic residues. Residues 140-203 (VAKKRRRRVR…QSLRYCLQKG (64 aa)) form the bZIP domain. Residues 142–162 (KKRRRRVRNRDAAVRSRERKK) are basic motif. The tract at residues 168–182 (LEKKSKYLERECLRL) is leucine-zipper. The helical transmembrane segment at 224 to 244 (LLLGSLLWLLGVNFICLFPYM) threads the bilayer.

The protein belongs to the bZIP family. In terms of assembly, interacts with BZIP28. As to expression, expressed in seedlings, rosette and cauline leaves, stems, buds, flowers, siliques, immature seeds, anthers and pollen grains.

It is found in the endoplasmic reticulum membrane. Its subcellular location is the nucleus. Transcription factor involved in the unfolded protein response (UPR). Acts during endoplasmic reticulum stress (ER) by activating unfolded protein response (UPR) target genes via direct binding to the UPR element (UPRE). Plays a role in plant immunity and abiotic stress responses. The polypeptide is bZIP transcription factor 60 (Arabidopsis thaliana (Mouse-ear cress)).